Reading from the N-terminus, the 207-residue chain is Proteasome subunit beta (207 aa).

Residues 1 to 9 (MSNKNTFEG) constitute a propeptide, removed in mature form; by autocatalysis. The active-site Nucleophile is the T10.

This sequence belongs to the peptidase T1B family. As to quaternary structure, the 20S proteasome core is composed of 14 alpha and 14 beta subunits that assemble into four stacked heptameric rings, resulting in a barrel-shaped structure. The two inner rings, each composed of seven catalytic beta subunits, are sandwiched by two outer rings, each composed of seven alpha subunits. The catalytic chamber with the active sites is on the inside of the barrel. Has a gated structure, the ends of the cylinder being occluded by the N-termini of the alpha-subunits. Is capped at one or both ends by the proteasome regulatory ATPase, PAN.

It is found in the cytoplasm. The catalysed reaction is Cleavage of peptide bonds with very broad specificity.. With respect to regulation, the formation of the proteasomal ATPase PAN-20S proteasome complex, via the docking of the C-termini of PAN into the intersubunit pockets in the alpha-rings, triggers opening of the gate for substrate entry. Interconversion between the open-gate and close-gate conformations leads to a dynamic regulation of the 20S proteasome proteolysis activity. Its function is as follows. Component of the proteasome core, a large protease complex with broad specificity involved in protein degradation. In Methanobrevibacter ruminantium (strain ATCC 35063 / DSM 1093 / JCM 13430 / OCM 146 / M1) (Methanobacterium ruminantium), this protein is Proteasome subunit beta.